The chain runs to 447 residues: Na(+)-translocating NADH-quinone reductase subunit A (447 aa).

Belongs to the NqrA family. As to quaternary structure, composed of six subunits; NqrA, NqrB, NqrC, NqrD, NqrE and NqrF.

The catalysed reaction is a ubiquinone + n Na(+)(in) + NADH + H(+) = a ubiquinol + n Na(+)(out) + NAD(+). Functionally, NQR complex catalyzes the reduction of ubiquinone-1 to ubiquinol by two successive reactions, coupled with the transport of Na(+) ions from the cytoplasm to the periplasm. NqrA to NqrE are probably involved in the second step, the conversion of ubisemiquinone to ubiquinol. The polypeptide is Na(+)-translocating NADH-quinone reductase subunit A (Neisseria gonorrhoeae (strain NCCP11945)).